The following is a 591-amino-acid chain: Isocitrate dehydrogenase kinase/phosphatase (591 aa).

Residues 315–321 (APGVKGM) and Lys336 each bind ATP. Asp371 is an active-site residue.

Belongs to the AceK family.

The protein resides in the cytoplasm. It carries out the reaction L-seryl-[isocitrate dehydrogenase] + ATP = O-phospho-L-seryl-[isocitrate dehydrogenase] + ADP + H(+). In terms of biological role, bifunctional enzyme which can phosphorylate or dephosphorylate isocitrate dehydrogenase (IDH) on a specific serine residue. This is a regulatory mechanism which enables bacteria to bypass the Krebs cycle via the glyoxylate shunt in response to the source of carbon. When bacteria are grown on glucose, IDH is fully active and unphosphorylated, but when grown on acetate or ethanol, the activity of IDH declines drastically concomitant with its phosphorylation. The sequence is that of Isocitrate dehydrogenase kinase/phosphatase from Pectobacterium atrosepticum (strain SCRI 1043 / ATCC BAA-672) (Erwinia carotovora subsp. atroseptica).